The following is a 90-amino-acid chain: DNA-directed RNA polymerase subunit omega (90 aa).

It belongs to the RNA polymerase subunit omega family. In terms of assembly, the RNAP catalytic core consists of 2 alpha, 1 beta, 1 beta' and 1 omega subunit. When a sigma factor is associated with the core the holoenzyme is formed, which can initiate transcription.

The enzyme catalyses RNA(n) + a ribonucleoside 5'-triphosphate = RNA(n+1) + diphosphate. Its function is as follows. Promotes RNA polymerase assembly. Latches the N- and C-terminal regions of the beta' subunit thereby facilitating its interaction with the beta and alpha subunits. The chain is DNA-directed RNA polymerase subunit omega from Alteromonas mediterranea (strain DSM 17117 / CIP 110805 / LMG 28347 / Deep ecotype).